The sequence spans 420 residues: Serine hydroxymethyltransferase (420 aa).

Residues Leu121 and 125–127 (GHL) contribute to the (6S)-5,6,7,8-tetrahydrofolate site. Lys229 bears the N6-(pyridoxal phosphate)lysine mark.

Belongs to the SHMT family. Homodimer. It depends on pyridoxal 5'-phosphate as a cofactor.

It is found in the cytoplasm. It carries out the reaction (6R)-5,10-methylene-5,6,7,8-tetrahydrofolate + glycine + H2O = (6S)-5,6,7,8-tetrahydrofolate + L-serine. The protein operates within one-carbon metabolism; tetrahydrofolate interconversion. It participates in amino-acid biosynthesis; glycine biosynthesis; glycine from L-serine: step 1/1. In terms of biological role, catalyzes the reversible interconversion of serine and glycine with tetrahydrofolate (THF) serving as the one-carbon carrier. This reaction serves as the major source of one-carbon groups required for the biosynthesis of purines, thymidylate, methionine, and other important biomolecules. Also exhibits THF-independent aldolase activity toward beta-hydroxyamino acids, producing glycine and aldehydes, via a retro-aldol mechanism. The chain is Serine hydroxymethyltransferase from Streptomyces coelicolor (strain ATCC BAA-471 / A3(2) / M145).